A 154-amino-acid chain; its full sequence is Prefoldin subunit 2 (154 aa).

Disordered stretches follow at residues 1-20 (MADS…GKGA) and 126-154 (LMGE…VLVS). The span at 9–18 (GKSGGSGTGK) shows a compositional bias: gly residues. The span at 126 to 139 (LMGEDEKPAAKENS) shows a compositional bias: basic and acidic residues. Positions 141 to 154 (GAGAKSSSAGVLVS) are enriched in low complexity.

Belongs to the prefoldin subunit beta family. As to quaternary structure, heterohexamer of two PFD-alpha type and four PFD-beta type subunits. Component of the PAQosome complex which is responsible for the biogenesis of several protein complexes and which consists of R2TP complex members RUVBL1, RUVBL2, RPAP3 and PIH1D1, URI complex members PFDN2, PFDN6, PDRG1, UXT and URI1 as well as ASDURF, POLR2E and DNAAF10/WDR92. Interacts with URI1; the interaction is phosphorylation-dependent and occurs in a growth-dependent manner.

It localises to the nucleus. It is found in the cytoplasm. The protein localises to the mitochondrion. Functionally, binds specifically to cytosolic chaperonin (c-CPN) and transfers target proteins to it. Binds to nascent polypeptide chain and promotes folding in an environment in which there are many competing pathways for nonnative proteins. This is Prefoldin subunit 2 (Pfdn2) from Rattus norvegicus (Rat).